The following is a 249-amino-acid chain: Triosephosphate isomerase (249 aa).

Substrate is bound by residues Asn10 and Lys12. Catalysis depends on His94, which acts as the Electrophile. Glu166 acts as the Proton acceptor in catalysis.

The protein belongs to the triosephosphate isomerase family. In terms of assembly, homodimer. The N-terminus is blocked.

The enzyme catalyses D-glyceraldehyde 3-phosphate = dihydroxyacetone phosphate. The protein operates within carbohydrate biosynthesis; gluconeogenesis. Its pathway is carbohydrate degradation; glycolysis; D-glyceraldehyde 3-phosphate from glycerone phosphate: step 1/1. This chain is Triosephosphate isomerase (TPI1), found in Paracoccidioides lutzii (strain ATCC MYA-826 / Pb01) (Paracoccidioides brasiliensis).